The chain runs to 186 residues: Lipoprotein signal peptidase (186 aa).

Helical transmembrane passes span 8 to 28 (FFSV…FLDL), 44 to 64 (IPVL…FVFG), 66 to 86 (FQDN…FLIF), and 97 to 117 (AWGW…KFFV). Active-site residues include aspartate 142 and aspartate 164. Residues 157–177 (WPAFNVADSCVSIGIVILLFT) form a helical membrane-spanning segment.

This sequence belongs to the peptidase A8 family.

Its subcellular location is the cell inner membrane. It catalyses the reaction Release of signal peptides from bacterial membrane prolipoproteins. Hydrolyzes -Xaa-Yaa-Zaa-|-(S,diacylglyceryl)Cys-, in which Xaa is hydrophobic (preferably Leu), and Yaa (Ala or Ser) and Zaa (Gly or Ala) have small, neutral side chains.. The protein operates within protein modification; lipoprotein biosynthesis (signal peptide cleavage). In terms of biological role, this protein specifically catalyzes the removal of signal peptides from prolipoproteins. This Leptospira biflexa serovar Patoc (strain Patoc 1 / ATCC 23582 / Paris) protein is Lipoprotein signal peptidase.